The following is a 390-amino-acid chain: Prostaglandin E2 receptor EP3 subtype (390 aa).

Residues 1–53 (MKETRGYGGDAPFCTRLNHSYTGMWAPERSAEARGNLTRPPGSGEDCGSVSVA) lie on the Extracellular side of the membrane. Asn-18 and Asn-36 each carry an N-linked (GlcNAc...) asparagine glycan. The chain crosses the membrane as a helical span at residues 54 to 78 (FPITMLLTGFVGNALAMLLVSRSYR). Residues 79 to 91 (RRESKRKKSFLLC) are Cytoplasmic-facing. Residues 92-112 (IGWLALTDLVGQLLTTPVVIV) traverse the membrane as a helical segment. Topologically, residues 113–131 (VYLSKQRWEHIDPSGRLCT) are extracellular. Residues 132 to 153 (FFGLTMTVFGLSSLFIASAMAV) form a helical membrane-spanning segment. Over 154–175 (ERALAIRAPHWYASHMKTRATR) the chain is Cytoplasmic. A helical membrane pass occupies residues 176-197 (AVLLGVWLAVLAFALLPVLGVG). Residues 198–227 (QYTVQWPGTWCFISTGRGGNGTSSSHNWGN) lie on the Extracellular side of the membrane. A helical membrane pass occupies residues 228–253 (LFFASAFAFLGLLALTVTFSCNLATI). Residues 254-283 (KALVSRCRAKATASQSSAQWGRITTETAIQ) lie on the Cytoplasmic side of the membrane. Residues 284-307 (LMGIMCVLSVCWSPLLIMMLKMIF) form a helical membrane-spanning segment. At 308-327 (NQTSVEHCKTHTEKQKECNF) the chain is on the extracellular side. A helical transmembrane segment spans residues 328–349 (FLIAVRLASLNQILDPWVYLLL). Residues 350–390 (RKILLRKFCQIRYHTNNYASSSTSLPCQCSSTLMWSDHLER) lie on the Cytoplasmic side of the membrane.

Belongs to the G-protein coupled receptor 1 family. As to quaternary structure, interacts (via C-terminus) with MKLN1. As to expression, detected in kidney. Expressed in small intestine, heart, pancreas, gastric fundic mucosa, mammary artery and pulmonary vessels.

It is found in the cell membrane. Its function is as follows. Receptor for prostaglandin E2 (PGE2). The activity of this receptor can couple to both the inhibition of adenylate cyclase mediated by G(i) proteins, and to an elevation of intracellular calcium. Required for normal development of fever in response to pyrinogens, including IL1B, prostaglandin E2 and bacterial lipopolysaccharide (LPS). Required for normal potentiation of platelet aggregation by prostaglandin E2, and thus plays a role in the regulation of blood coagulation. Required for increased HCO3(-) secretion in the duodenum in response to mucosal acidification, and thereby contributes to the protection of the mucosa against acid-induced ulceration. Not required for normal kidney function, normal urine volume and osmolality. This chain is Prostaglandin E2 receptor EP3 subtype (PTGER3), found in Homo sapiens (Human).